The sequence spans 273 residues: 4-hydroxy-tetrahydrodipicolinate reductase (273 aa).

NAD(+)-binding positions include Gly-11–Met-16 and Gly-106–Thr-108. Residue His-162 is the Proton donor/acceptor of the active site. His-163 contributes to the (S)-2,3,4,5-tetrahydrodipicolinate binding site. Lys-166 serves as the catalytic Proton donor. A (S)-2,3,4,5-tetrahydrodipicolinate-binding site is contributed by Gly-172 to Thr-173.

This sequence belongs to the DapB family.

The protein resides in the cytoplasm. The enzyme catalyses (S)-2,3,4,5-tetrahydrodipicolinate + NAD(+) + H2O = (2S,4S)-4-hydroxy-2,3,4,5-tetrahydrodipicolinate + NADH + H(+). It carries out the reaction (S)-2,3,4,5-tetrahydrodipicolinate + NADP(+) + H2O = (2S,4S)-4-hydroxy-2,3,4,5-tetrahydrodipicolinate + NADPH + H(+). It functions in the pathway amino-acid biosynthesis; L-lysine biosynthesis via DAP pathway; (S)-tetrahydrodipicolinate from L-aspartate: step 4/4. In terms of biological role, catalyzes the conversion of 4-hydroxy-tetrahydrodipicolinate (HTPA) to tetrahydrodipicolinate. The chain is 4-hydroxy-tetrahydrodipicolinate reductase from Synechococcus elongatus (strain ATCC 33912 / PCC 7942 / FACHB-805) (Anacystis nidulans R2).